The sequence spans 477 residues: Bifunctional protein HldE (477 aa).

The segment at 1 to 318 (MKVTLPEFER…ENAVRGRADT (318 aa)) is ribokinase. Lysine 179 bears the N6-acetyllysine mark. 195–198 (NLSE) is an ATP binding site. Aspartate 264 is a catalytic residue. A cytidylyltransferase region spans residues 344–477 (MTNGVFDILH…IKKIQQDKKG (134 aa)).

In the N-terminal section; belongs to the carbohydrate kinase PfkB family. This sequence in the C-terminal section; belongs to the cytidylyltransferase family. As to quaternary structure, homodimer.

It carries out the reaction D-glycero-beta-D-manno-heptose 7-phosphate + ATP = D-glycero-beta-D-manno-heptose 1,7-bisphosphate + ADP + H(+). The catalysed reaction is D-glycero-beta-D-manno-heptose 1-phosphate + ATP + H(+) = ADP-D-glycero-beta-D-manno-heptose + diphosphate. The protein operates within nucleotide-sugar biosynthesis; ADP-L-glycero-beta-D-manno-heptose biosynthesis; ADP-L-glycero-beta-D-manno-heptose from D-glycero-beta-D-manno-heptose 7-phosphate: step 1/4. It functions in the pathway nucleotide-sugar biosynthesis; ADP-L-glycero-beta-D-manno-heptose biosynthesis; ADP-L-glycero-beta-D-manno-heptose from D-glycero-beta-D-manno-heptose 7-phosphate: step 3/4. Catalyzes the phosphorylation of D-glycero-D-manno-heptose 7-phosphate at the C-1 position to selectively form D-glycero-beta-D-manno-heptose-1,7-bisphosphate. Its function is as follows. Catalyzes the ADP transfer from ATP to D-glycero-beta-D-manno-heptose 1-phosphate, yielding ADP-D-glycero-beta-D-manno-heptose. The chain is Bifunctional protein HldE from Shigella flexneri serotype 5b (strain 8401).